A 1238-amino-acid chain; its full sequence is Cryptic loci regulator protein 1 (1238 aa).

Disordered regions lie at residues 133–156, 196–237, 277–303, 546–568, 696–735, and 784–824; these read TQQQ…TEPN, PFSN…PSSI, ASLY…LGSM, QKSV…IDTT, SDNT…PFVH, and TLKE…QSRS. Over residues 214–223 the composition is skewed to polar residues; sequence NVKNNSKKTA. The span at 224-237 shows a compositional bias: low complexity; it reads SSVNSNHSSIPSSI. A compositionally biased stretch (polar residues) spans 291 to 303; sequence SSRNTSSYNLGSM. Positions 702–723 are enriched in low complexity; the sequence is SLPKPSNSKLSSISSDGDASSN. Over residues 785–796 the composition is skewed to basic and acidic residues; it reads LKEDASSTKQAK. The span at 810–819 shows a compositional bias: polar residues; that stretch reads NDVSKNNSGE. The segment at 1062–1087 adopts a C2H2-type zinc-finger fold; sequence LNCEVSNCKKCFSNYEDMFKHLQHSH.

As to quaternary structure, interacts with clr3.

The protein resides in the nucleus. Its subcellular location is the chromosome. It localises to the centromere. It is found in the telomere. In terms of biological role, regulates silencing of the mat2 and mat3 loci. Organizes the chromatin structure of the mating-type region where it also participates in establishing the 'cold spot' for recombination. Required for proper positioning of nucleosomes at heterochromatic loci and for transcriptional gene silencing (TGS) function of the Snf2/Hdac-containing repressor complex (SHREC). The chain is Cryptic loci regulator protein 1 (clr1) from Schizosaccharomyces pombe (strain 972 / ATCC 24843) (Fission yeast).